The following is a 155-amino-acid chain: Small ribosomal subunit protein uS7c (155 aa).

The protein belongs to the universal ribosomal protein uS7 family. In terms of assembly, part of the 30S ribosomal subunit.

It localises to the plastid. Its subcellular location is the chloroplast. One of the primary rRNA binding proteins, it binds directly to 16S rRNA where it nucleates assembly of the head domain of the 30S subunit. This chain is Small ribosomal subunit protein uS7c (rps7), found in Gunnera chilensis (Chilean rhubarb).